Reading from the N-terminus, the 851-residue chain is UPF0508 protein CAGL0M08074g (851 aa).

Belongs to the UPF0508 family.

The protein is UPF0508 protein CAGL0M08074g of Candida glabrata (strain ATCC 2001 / BCRC 20586 / JCM 3761 / NBRC 0622 / NRRL Y-65 / CBS 138) (Yeast).